Here is a 66-residue protein sequence, read N- to C-terminus: Conotoxin Cl14.1b (66 aa).

The N-terminal stretch at 1–19 is a signal peptide; the sequence is MNVTVMFLVLLLTMPLTDG. The propeptide occupies 20 to 47; that stretch reads FNIRAINGGELFGLVQRDAGNALDHGFY.

This sequence belongs to the conotoxin L superfamily. Post-translationally, contains 2 disulfide bonds. As to expression, expressed by the venom duct.

Its subcellular location is the secreted. This Californiconus californicus (California cone) protein is Conotoxin Cl14.1b.